The following is a 962-amino-acid chain: Insulin-degrading enzyme homolog (962 aa).

The span at 1-10 shows a compositional bias: low complexity; the sequence is MVANEQQQQQ. The tract at residues 1 to 21 is disordered; the sequence is MVANEQQQQQQEEERKEVKLI. H74 is a Zn(2+) binding site. E77 serves as the catalytic Proton acceptor. Residues H78 and E155 each contribute to the Zn(2+) site.

The protein belongs to the peptidase M16 family. Homodimer. The cofactor is Zn(2+).

It localises to the cytoplasm. The chain is Insulin-degrading enzyme homolog from Dictyostelium discoideum (Social amoeba).